The sequence spans 164 residues: Lipoprotein signal peptidase (164 aa).

Helical transmembrane passes span 6-26 (LGILTAVIALALDQATKLWLL), 39-59 (VTSFFDLVLAWNTGISYGWFA), 65-85 (GQILMLAFKAVAIVALAIWMA), and 88-108 (TTKLATIGLGLIIGGAIGNAI). Catalysis depends on residues D118 and D140. A helical membrane pass occupies residues 141 to 161 (VAIVVGVVALLYDSLIGAPAV).

The protein belongs to the peptidase A8 family.

The protein resides in the cell inner membrane. The enzyme catalyses Release of signal peptides from bacterial membrane prolipoproteins. Hydrolyzes -Xaa-Yaa-Zaa-|-(S,diacylglyceryl)Cys-, in which Xaa is hydrophobic (preferably Leu), and Yaa (Ala or Ser) and Zaa (Gly or Ala) have small, neutral side chains.. It functions in the pathway protein modification; lipoprotein biosynthesis (signal peptide cleavage). This protein specifically catalyzes the removal of signal peptides from prolipoproteins. In Rhodopseudomonas palustris (strain TIE-1), this protein is Lipoprotein signal peptidase.